The sequence spans 296 residues: Formamidopyrimidine-DNA glycosylase (296 aa).

Proline 2 acts as the Schiff-base intermediate with DNA in catalysis. Catalysis depends on glutamate 3, which acts as the Proton donor. Lysine 61 functions as the Proton donor; for beta-elimination activity in the catalytic mechanism. DNA is bound by residues histidine 104, arginine 123, and lysine 169. The FPG-type zinc finger occupies 255–289 (DAYGREGEPCRRCGAIMRRDKFMNRSSFYCPRCQP). Arginine 279 (proton donor; for delta-elimination activity) is an active-site residue.

Belongs to the FPG family. As to quaternary structure, monomer. The cofactor is Zn(2+).

It catalyses the reaction Hydrolysis of DNA containing ring-opened 7-methylguanine residues, releasing 2,6-diamino-4-hydroxy-5-(N-methyl)formamidopyrimidine.. The catalysed reaction is 2'-deoxyribonucleotide-(2'-deoxyribose 5'-phosphate)-2'-deoxyribonucleotide-DNA = a 3'-end 2'-deoxyribonucleotide-(2,3-dehydro-2,3-deoxyribose 5'-phosphate)-DNA + a 5'-end 5'-phospho-2'-deoxyribonucleoside-DNA + H(+). Its function is as follows. Involved in base excision repair of DNA damaged by oxidation or by mutagenic agents. Acts as a DNA glycosylase that recognizes and removes damaged bases. Has a preference for oxidized purines, such as 7,8-dihydro-8-oxoguanine (8-oxoG). Has AP (apurinic/apyrimidinic) lyase activity and introduces nicks in the DNA strand. Cleaves the DNA backbone by beta-delta elimination to generate a single-strand break at the site of the removed base with both 3'- and 5'-phosphates. The sequence is that of Formamidopyrimidine-DNA glycosylase from Mycobacterium sp. (strain KMS).